The sequence spans 63 residues: Beta-defensin 38 (63 aa).

The N-terminal stretch at methionine 1–alanine 21 is a signal peptide. Intrachain disulfides connect cysteine 29/cysteine 58, cysteine 36/cysteine 51, and cysteine 41/cysteine 59.

This sequence belongs to the beta-defensin family.

It is found in the secreted. Functionally, has antibacterial activity. This chain is Beta-defensin 38 (Defb38), found in Rattus norvegicus (Rat).